A 503-amino-acid polypeptide reads, in one-letter code: AMP phosphorylase (503 aa).

Residues glycine 168, serine 194–serine 199, and threonine 203 contribute to the AMP site. Residue aspartate 256 is the Proton donor of the active site. Residues serine 264 and lysine 288 each contribute to the AMP site.

This sequence belongs to the thymidine/pyrimidine-nucleoside phosphorylase family. Type 2 subfamily.

It catalyses the reaction AMP + phosphate = alpha-D-ribose 1,5-bisphosphate + adenine. It carries out the reaction CMP + phosphate = cytosine + alpha-D-ribose 1,5-bisphosphate. The catalysed reaction is UMP + phosphate = alpha-D-ribose 1,5-bisphosphate + uracil. In terms of biological role, catalyzes the conversion of AMP and phosphate to adenine and ribose 1,5-bisphosphate (R15P). Exhibits phosphorylase activity toward CMP and UMP in addition to AMP. Functions in an archaeal AMP degradation pathway, together with R15P isomerase and RubisCO. The chain is AMP phosphorylase from Pyrococcus furiosus (strain ATCC 43587 / DSM 3638 / JCM 8422 / Vc1).